The sequence spans 1049 residues: Ataxin-2-like protein (1049 aa).

Residue methionine 1 is modified to N-acetylmethionine. The tract at residues 1–54 (MLKPQPPQQTSQPQQPPPTQQAVARRSPGGTSPPNGGLPGPLTATAAPPGPPAA) is disordered. Serine 27 carries the post-translational modification Phosphoserine. Threonine 45 carries the post-translational modification Phosphothreonine. The interaction with MPL stretch occupies residues 96–119 (SVRGQTTGKGPPQSPVFEGVYNNS). Serine 109 is subject to Phosphoserine. At tyrosine 116 the chain carries Phosphotyrosine. A Sm domain is found at 120–197 (RMLHFLTAVV…VLLVHFRNVD (78 aa)). Lysine 205 is modified (N6-acetyllysine). Serine 236 carries the phosphoserine modification. Residue tyrosine 262 is modified to Phosphotyrosine. Serine 304 is subject to Phosphoserine. Tyrosine 307 is subject to Phosphotyrosine. Residues 314 to 326 (ENDDGRTEEEKHS) are compositionally biased toward basic and acidic residues. Disordered stretches follow at residues 314 to 522 (ENDD…RNLE), 554 to 573 (QFKLQPSSSPETGLDPFPSR), 578 to 704 (EAKG…LTAG), 736 to 772 (VSNSVPGQQGKYRGAKGSLPPQRSDQHQPASAPPMMQ), 824 to 852 (SNPRMLTSGSHPQAIVSSSTPQYPAAEQP), 868 to 944 (HATQ…SSFP), and 999 to 1049 (PQGH…PPGN). Over residues 328 to 340 (VQRQGSGRESPSL) the composition is skewed to polar residues. Serine 333 and serine 337 each carry phosphoserine. A Glycyl lysine isopeptide (Lys-Gly) (interchain with G-Cter in SUMO2) cross-link involves residue lysine 346. Tyrosine 347 is modified (phosphotyrosine). Arginine 359 carries the asymmetric dimethylarginine modification. Residues 361–378 (GVRCSSSRGGRPGLSSLP) are compositionally biased toward low complexity. Phosphoserine occurs at positions 389, 407, and 453. The segment covering 454–466 (PKSAAPAPVSASC) has biased composition (low complexity). The segment covering 475 to 487 (VASSASIPVTSSV) has biased composition (polar residues). 2 positions are modified to phosphoserine: serine 496 and serine 499. Over residues 508–519 (DVKELPTKEPSR) the composition is skewed to basic and acidic residues. 3 positions are modified to phosphoserine: serine 560, serine 561, and serine 562. Positions 578–587 (EAKGKEKEVD) are enriched in basic and acidic residues. Serine 597 carries the post-translational modification Phosphoserine. Threonine 635 carries the post-translational modification Phosphothreonine. A phosphoserine mark is found at serine 637, serine 677, serine 683, and serine 687. Residues 681–697 (STSTPTSPGPRTHSTPS) are compositionally biased toward low complexity. 2 stretches are compositionally biased toward polar residues: residues 824–845 (SNPRMLTSGSHPQAIVSSSTPQ) and 878–902 (QPATTPTGSQPQSQHAAPSPVQHQA). Residues 935–944 (SAQSPQSSFP) are compositionally biased toward low complexity. Residues 1033-1042 (QVQSHPSQQL) are compositionally biased toward polar residues.

Belongs to the ataxin-2 family. Interacts with MPL/TPOR and EPOR and dissociates after ligand stimulation. Interacts with DDX6, G3BP, and ATXN2. Interacts with PRMT1. Interacts with CIC and ATXN1. In terms of processing, thrombopoietin triggers the phosphorylation on tyrosine residues in a way that is dependent on MPL C-terminal domain. Post-translationally, asymmetrically dimethylated. Probably methylated by PRMT1. Expressed in cerebellum.

The protein localises to the membrane. The protein resides in the cytoplasm. It is found in the nucleus speckle. Its subcellular location is the cytoplasmic granule. Its function is as follows. Involved in the regulation of stress granule and P-body formation. The chain is Ataxin-2-like protein (Atxn2l) from Mus musculus (Mouse).